Consider the following 429-residue polypeptide: G2/mitotic-specific cyclin-B1 (429 aa).

Positions 71-114 (TGKVSAKIPPPKPLEKVPPVSEPEVELAETHEPEPVMDEKLSPE) are disordered. An N6-acetyllysine modification is found at K73. Residues 98–112 (AETHEPEPVMDEKLS) are compositionally biased toward basic and acidic residues. S122 carries the post-translational modification Phosphoserine; by CDK1. The residue at position 124 (S124) is a Phosphoserine. Phosphoserine; by PLK1 is present on S129. S143 is subject to Phosphoserine. 2 interaction with CDK2 regions span residues 165–173 (EYVKDIYAY) and 254–257 (YEEM). T317 carries the phosphothreonine modification.

This sequence belongs to the cyclin family. Cyclin AB subfamily. Interacts with the CDC2 protein kinase to form a serine/threonine kinase holoenzyme complex also known as maturation promoting factor (MPF). The cyclin subunit imparts substrate specificity to the complex. Binds HEI10. Interacts with catalytically active RALBP1 and CDC2 during mitosis to form an endocytotic complex during interphase. Interacts with CCNF; interaction is required for nuclear localization. Interacts with CDK5RAP3. Interacts with RFPL4A and UBE2A. Interacts with INCA1. Post-translationally, ubiquitinated by the SCF(NIPA) complex during interphase, leading to its destruction. Not ubiquitinated during G2/M phases. Phosphorylated by PLK1 at Ser-129 on centrosomes during prophase: phosphorylation by PLK1 does not cause nuclear import. Phosphorylation at Ser-143 was also reported to be mediated by PLK1 but Ser-129 seems to be the primary phosphorylation site.

It is found in the cytoplasm. The protein localises to the nucleus. It localises to the cytoskeleton. Its subcellular location is the microtubule organizing center. The protein resides in the centrosome. Essential for the control of the cell cycle at the G2/M (mitosis) transition. The sequence is that of G2/mitotic-specific cyclin-B1 (CCNB1) from Mesocricetus auratus (Golden hamster).